A 389-amino-acid polypeptide reads, in one-letter code: Lipid-A-disaccharide synthase (389 aa).

It belongs to the LpxB family.

It carries out the reaction a lipid X + a UDP-2-N,3-O-bis[(3R)-3-hydroxyacyl]-alpha-D-glucosamine = a lipid A disaccharide + UDP + H(+). Its pathway is bacterial outer membrane biogenesis; LPS lipid A biosynthesis. In terms of biological role, condensation of UDP-2,3-diacylglucosamine and 2,3-diacylglucosamine-1-phosphate to form lipid A disaccharide, a precursor of lipid A, a phosphorylated glycolipid that anchors the lipopolysaccharide to the outer membrane of the cell. The chain is Lipid-A-disaccharide synthase from Histophilus somni (strain 2336) (Haemophilus somnus).